A 417-amino-acid polypeptide reads, in one-letter code: Gamma-glutamyl phosphate reductase (417 aa).

It belongs to the gamma-glutamyl phosphate reductase family.

Its subcellular location is the cytoplasm. It carries out the reaction L-glutamate 5-semialdehyde + phosphate + NADP(+) = L-glutamyl 5-phosphate + NADPH + H(+). It functions in the pathway amino-acid biosynthesis; L-proline biosynthesis; L-glutamate 5-semialdehyde from L-glutamate: step 2/2. Its function is as follows. Catalyzes the NADPH-dependent reduction of L-glutamate 5-phosphate into L-glutamate 5-semialdehyde and phosphate. The product spontaneously undergoes cyclization to form 1-pyrroline-5-carboxylate. The protein is Gamma-glutamyl phosphate reductase of Escherichia coli O17:K52:H18 (strain UMN026 / ExPEC).